A 671-amino-acid chain; its full sequence is DEAD-box ATP-dependent RNA helicase 7 (671 aa).

The tract at residues 1 to 84 (MPSLMLSDKK…EKKKSSKKVK (84 aa)) is disordered. Positions 26 to 41 (LDSKKGKKEQKLKLSD) are enriched in basic and acidic residues. 2 positions are modified to phosphoserine: Ser-40 and Ser-42. Over residues 50 to 60 (KKSKKKDKKRK) the composition is skewed to basic residues. Residues 96–124 (NAVSKFRISAPLREKLKANGIEALFPIQA) carry the Q motif motif. Positions 127 to 309 (FDMVLDGADL…NRFLKRDQKT (183 aa)) constitute a Helicase ATP-binding domain. An ATP-binding site is contributed by 140 to 147 (ARTGQGKT). The DEAD box signature appears at 255–258 (DEAD). The 141-residue stretch at 339 to 479 (LIPDIISCYS…HLAAPQPDEI (141 aa)) folds into the Helicase C-terminal domain. A disordered region spans residues 627–671 (EREPLPQKRFGGGGRGNRFGGGGGNRFGGGGGRGRGGSGGRGQRY). A compositionally biased stretch (gly residues) spans 636 to 671 (FGGGGRGNRFGGGGGNRFGGGGGRGRGGSGGRGQRY).

This sequence belongs to the DEAD box helicase family. DDX21/DDX50 subfamily.

Its subcellular location is the nucleus. It catalyses the reaction ATP + H2O = ADP + phosphate + H(+). This chain is DEAD-box ATP-dependent RNA helicase 7 (RH7), found in Arabidopsis thaliana (Mouse-ear cress).